A 424-amino-acid chain; its full sequence is Catabolic NAD-specific glutamate dehydrogenase RocG (424 aa).

Substrate contacts are provided by Lys80 and Lys104. Residue Lys116 is the Proton donor of the active site. NAD(+)-binding residues include Thr200 and Asn231. Ser358 contributes to the substrate binding site.

It belongs to the Glu/Leu/Phe/Val dehydrogenases family. Homohexamer. Interacts with transcriptional regulator GltC.

The enzyme catalyses L-glutamate + NAD(+) + H2O = 2-oxoglutarate + NH4(+) + NADH + H(+). Functionally, devoted to catabolic function of glutamate (and other amino acids of the glutamate family) utilization as sole nitrogen source. It is not involved in anabolic function of glutamate biosynthesis since B.subtilis possesses only one route of glutamate biosynthesis from ammonia, catalyzed by glutamate synthase. Wild-type cells are unable to utilize glutamate or glutamine as a sole carbon source; thus RocG does not function physiologically to synthesize glutamate, but it is involved in the utilization of arginine, and proline as carbon or nitrogen source. The catabolic RocG is essential for controlling gltAB expression via an inhibitory interactions with the transcriptional regulator GltC in response to the availability of sugars. The polypeptide is Catabolic NAD-specific glutamate dehydrogenase RocG (Bacillus subtilis (strain 168)).